The primary structure comprises 265 residues: Orotidine 5'-phosphate decarboxylase (265 aa).

Residues aspartate 38, lysine 60 to histidine 62, aspartate 92 to threonine 101, tyrosine 218, and arginine 236 each bind substrate. The Proton donor role is filled by lysine 94.

The protein belongs to the OMP decarboxylase family.

It carries out the reaction orotidine 5'-phosphate + H(+) = UMP + CO2. Its pathway is pyrimidine metabolism; UMP biosynthesis via de novo pathway; UMP from orotate: step 2/2. The sequence is that of Orotidine 5'-phosphate decarboxylase (URA3) from Cyberlindnera fabianii (Yeast).